Here is a 127-residue protein sequence, read N- to C-terminus: Glycine cleavage system H protein (127 aa).

Residues 24-105 (TVKVGISDHA…PYEAWLFAVR (82 aa)) form the Lipoyl-binding domain. Lysine 65 is subject to N6-lipoyllysine.

Belongs to the GcvH family. The glycine cleavage system is composed of four proteins: P, T, L and H. It depends on (R)-lipoate as a cofactor.

The glycine cleavage system catalyzes the degradation of glycine. The H protein shuttles the methylamine group of glycine from the P protein to the T protein. The chain is Glycine cleavage system H protein from Methylococcus capsulatus (strain ATCC 33009 / NCIMB 11132 / Bath).